The following is a 252-amino-acid chain: Imidazole glycerol phosphate synthase subunit HisF (252 aa).

Active-site residues include Asp13 and Asp132.

The protein belongs to the HisA/HisF family. Heterodimer of HisH and HisF.

It is found in the cytoplasm. It catalyses the reaction 5-[(5-phospho-1-deoxy-D-ribulos-1-ylimino)methylamino]-1-(5-phospho-beta-D-ribosyl)imidazole-4-carboxamide + L-glutamine = D-erythro-1-(imidazol-4-yl)glycerol 3-phosphate + 5-amino-1-(5-phospho-beta-D-ribosyl)imidazole-4-carboxamide + L-glutamate + H(+). Its pathway is amino-acid biosynthesis; L-histidine biosynthesis; L-histidine from 5-phospho-alpha-D-ribose 1-diphosphate: step 5/9. Its function is as follows. IGPS catalyzes the conversion of PRFAR and glutamine to IGP, AICAR and glutamate. The HisF subunit catalyzes the cyclization activity that produces IGP and AICAR from PRFAR using the ammonia provided by the HisH subunit. The polypeptide is Imidazole glycerol phosphate synthase subunit HisF (Campylobacter hominis (strain ATCC BAA-381 / DSM 21671 / CCUG 45161 / LMG 19568 / NCTC 13146 / CH001A)).